The primary structure comprises 205 residues: Meiotic nuclear division protein 1 homolog (205 aa).

Position 2 is an N-acetylserine (Ser-2). Positions 83–173 form a coiled coil; sequence KRKLEVLDSQ…EAANRWTDNI (91 aa).

This sequence belongs to the MND1 family. Heterodimer with PSMC3IP/HOP2. MND1-PSMC3IP interacts with DMC1 and RAD51 and binds preferentially to dsDNA.

The protein resides in the nucleus. Its function is as follows. Required for proper homologous chromosome pairing and efficient cross-over and intragenic recombination during meiosis. Stimulates both DMC1- and RAD51-mediated homologous strand assimilation, which is required for the resolution of meiotic double-strand breaks. The chain is Meiotic nuclear division protein 1 homolog from Bos taurus (Bovine).